The sequence spans 448 residues: Adenylosuccinate synthetase (448 aa).

GTP-binding positions include 22-28 and 50-52; these read GDEGKGK and GHT. Asp-23 functions as the Proton acceptor in the catalytic mechanism. Positions 23 and 50 each coordinate Mg(2+). IMP is bound by residues 23–26, 48–51, Thr-139, Arg-153, Gln-234, Thr-249, and Arg-321; these read DEGK and NAGH. The active-site Proton donor is the His-51. 317–323 provides a ligand contact to substrate; that stretch reads SVTGRPR. GTP-binding positions include Arg-323, 349–351, and 431–433; these read KLD and STG.

This sequence belongs to the adenylosuccinate synthetase family. As to quaternary structure, homodimer. Mg(2+) serves as cofactor.

Its subcellular location is the cytoplasm. The catalysed reaction is IMP + L-aspartate + GTP = N(6)-(1,2-dicarboxyethyl)-AMP + GDP + phosphate + 2 H(+). Its pathway is purine metabolism; AMP biosynthesis via de novo pathway; AMP from IMP: step 1/2. In terms of biological role, plays an important role in the de novo pathway of purine nucleotide biosynthesis. Catalyzes the first committed step in the biosynthesis of AMP from IMP. The chain is Adenylosuccinate synthetase from Burkholderia pseudomallei (strain 1106a).